Here is an 858-residue protein sequence, read N- to C-terminus: Gamma-secretase-activating protein (858 aa).

The protein belongs to the GSAP family. Interacts with APP; specifically interacts with the CTF-alpha product of APP. Interacts with the gamma-secretase complex. The protein is first synthesized as a holoprotein form of 98 kDa and rapidly processed into the gamma-secretase-activating protein 16 kDa C-terminal form, which constitutes the predominant form.

The protein resides in the golgi apparatus. Its subcellular location is the trans-Golgi network. Functionally, regulator of gamma-secretase activity, which specifically activates the production of amyloid-beta protein (amyloid-beta protein 40 and amyloid-beta protein 42), without affecting the cleavage of other gamma-secretase targets such has Notch. The gamma-secretase complex is an endoprotease complex that catalyzes the intramembrane cleavage of integral membrane proteins such as Notch receptors and APP (amyloid-beta precursor protein). Specifically promotes the gamma-cleavage of APP CTF-alpha (also named APP-CTF) by the gamma-secretase complex to generate amyloid-beta, while it reduces the epsilon-cleavage of APP CTF-alpha, leading to a low production of AICD. This is Gamma-secretase-activating protein (Gsap) from Mus musculus (Mouse).